The sequence spans 1466 residues: ABC transporter G family member 40 (1466 aa).

Residues 1–21 (MSHRHHAALVASASGRSPSWG) are disordered. The ABC transporter 1 domain occupies 176–449 (GLIGQFGSSN…FEASGFRCPQ (274 aa)). 209–216 (GPPSSGKS) lines the ATP pocket. The ABC transmembrane type-2 1 domain occupies 527 to 740 (ESLKAVLCRE…SQNAISINEF (214 aa)). 6 helical membrane passes run 545-565 (FLYI…MTVF), 581-601 (FLGA…SELN), 633-653 (VPVS…VMGF), 664-684 (FLAF…LGAI), 690-710 (IAIS…GFVI), and 776-796 (FWLS…LYIL). Basic and acidic residues predominate over residues 821-831 (YTETRNEEHRS). The interval 821–851 (YTETRNEEHRSRTSTTTSSIPTSANGEGNRP) is disordered. Over residues 833-843 (TSTTTSSIPTS) the composition is skewed to low complexity. Residues 865-1117 (LCFNHLNYYV…KLVEYFETIL (253 aa)) form the ABC transporter 2 domain. Residue 910-917 (GVSGAGKT) participates in ATP binding. The 215-residue stretch at 1190 to 1404 (IQCVANLWKQ…TIYGVIASQF (215 aa)) folds into the ABC transmembrane type-2 2 domain. 7 helical membrane passes run 1209–1229 (YNSL…TVFW), 1241–1261 (LYNL…TNCM), 1297–1317 (FIYN…MIGY), 1327–1347 (FLFF…MLVA), 1355–1375 (ANIL…FLIF), 1396–1416 (IYGV…VPGG), and 1435–1455 (FLGY…LIFG).

The protein belongs to the ABC transporter superfamily. ABCG family. PDR (TC 3.A.1.205) subfamily.

It is found in the membrane. The sequence is that of ABC transporter G family member 40 from Oryza sativa subsp. japonica (Rice).